Here is a 377-residue protein sequence, read N- to C-terminus: D-alanine--D-alanine ligase (377 aa).

One can recognise an ATP-grasp domain in the interval 140 to 349 (KELLTVNGIR…NAKLVDMLID (210 aa)). 170 to 225 (VAELGNIVFVKAANQGSSVGISRVTNAEEYTEALSDSFQYDYKVLIEEAVNGAREL) contacts ATP. Positions 303, 316, and 318 each coordinate Mg(2+).

This sequence belongs to the D-alanine--D-alanine ligase family. Requires Mg(2+) as cofactor. Mn(2+) is required as a cofactor.

Its subcellular location is the cytoplasm. The enzyme catalyses 2 D-alanine + ATP = D-alanyl-D-alanine + ADP + phosphate + H(+). Its pathway is cell wall biogenesis; peptidoglycan biosynthesis. Its function is as follows. Cell wall formation. The protein is D-alanine--D-alanine ligase of Leuconostoc mesenteroides subsp. mesenteroides (strain ATCC 8293 / DSM 20343 / BCRC 11652 / CCM 1803 / JCM 6124 / NCDO 523 / NBRC 100496 / NCIMB 8023 / NCTC 12954 / NRRL B-1118 / 37Y).